Here is a 354-residue protein sequence, read N- to C-terminus: Holliday junction branch migration complex subunit RuvB (354 aa).

A large ATPase domain (RuvB-L) region spans residues 5 to 197 (TDDFSAADLP…FGIVARLEFY (193 aa)). Residues L36, R37, G78, K81, T82, T83, 144 to 146 (EDY), R187, Y197, and R234 contribute to the ATP site. Mg(2+) is bound at residue T82. Residues 198–268 (TAEELGRIVR…IANKALAMLD (71 aa)) form a small ATPAse domain (RuvB-S) region. Residues 271–354 (PQGFDVMDRK…PPVSGNDMFT (84 aa)) form a head domain (RuvB-H) region. 3 residues coordinate DNA: R307, R326, and R331.

This sequence belongs to the RuvB family. In terms of assembly, homohexamer. Forms an RuvA(8)-RuvB(12)-Holliday junction (HJ) complex. HJ DNA is sandwiched between 2 RuvA tetramers; dsDNA enters through RuvA and exits via RuvB. An RuvB hexamer assembles on each DNA strand where it exits the tetramer. Each RuvB hexamer is contacted by two RuvA subunits (via domain III) on 2 adjacent RuvB subunits; this complex drives branch migration. In the full resolvosome a probable DNA-RuvA(4)-RuvB(12)-RuvC(2) complex forms which resolves the HJ.

It localises to the cytoplasm. The enzyme catalyses ATP + H2O = ADP + phosphate + H(+). The RuvA-RuvB-RuvC complex processes Holliday junction (HJ) DNA during genetic recombination and DNA repair, while the RuvA-RuvB complex plays an important role in the rescue of blocked DNA replication forks via replication fork reversal (RFR). RuvA specifically binds to HJ cruciform DNA, conferring on it an open structure. The RuvB hexamer acts as an ATP-dependent pump, pulling dsDNA into and through the RuvAB complex. RuvB forms 2 homohexamers on either side of HJ DNA bound by 1 or 2 RuvA tetramers; 4 subunits per hexamer contact DNA at a time. Coordinated motions by a converter formed by DNA-disengaged RuvB subunits stimulates ATP hydrolysis and nucleotide exchange. Immobilization of the converter enables RuvB to convert the ATP-contained energy into a lever motion, pulling 2 nucleotides of DNA out of the RuvA tetramer per ATP hydrolyzed, thus driving DNA branch migration. The RuvB motors rotate together with the DNA substrate, which together with the progressing nucleotide cycle form the mechanistic basis for DNA recombination by continuous HJ branch migration. Branch migration allows RuvC to scan DNA until it finds its consensus sequence, where it cleaves and resolves cruciform DNA. The sequence is that of Holliday junction branch migration complex subunit RuvB from Polaromonas sp. (strain JS666 / ATCC BAA-500).